Here is a 273-residue protein sequence, read N- to C-terminus: N-alpha-acetyltransferase 30 (273 aa).

Disordered stretches follow at residues 1–39 and 62–85; these read MADAPSGPSVLSHYPGAGLAGEQQREEERHKGCHHHQLN and QKTRKDSGLVQPQGRTDTRAPNGL. Positions 125–273 constitute an N-acetyltransferase domain; the sequence is RYVRYESELQ…DALRLKLWLR (149 aa).

This sequence belongs to the acetyltransferase family. MAK3 subfamily. In terms of assembly, component of the N-terminal acetyltransferase C (NatC) complex.

It is found in the cytoplasm. The protein localises to the nucleus. The enzyme catalyses N-terminal L-methionyl-L-leucyl-[protein] + acetyl-CoA = N-terminal N(alpha)-acetyl-L-methionyl-L-leucyl-[protein] + CoA + H(+). The catalysed reaction is N-terminal L-methionyl-L-isoleucyl-[protein] + acetyl-CoA = N-terminal N(alpha)-acetyl-L-methionyl-L-isoleucyl-[protein] + CoA + H(+). It catalyses the reaction N-terminal L-methionyl-L-phenylalanyl-[protein] + acetyl-CoA = N-terminal N(alpha)-acetyl-L-methionyl-L-phenylalanyl-[protein] + CoA + H(+). It carries out the reaction N-terminal L-methionyl-L-tryptophyl-[protein] + acetyl-CoA = N-terminal N(alpha)-acetyl-L-methionyl-L-tryptophyl-[protein] + CoA + H(+). The enzyme catalyses N-terminal L-methionyl-L-tyrosyl-[protein] + acetyl-CoA = N-terminal N(alpha)-acetyl-L-methionyl-L-tyrosyl-[protein] + CoA + H(+). Catalytic subunit of the N-terminal acetyltransferase C (NatC) complex. Catalyzes acetylation of the N-terminal methionine residues of peptides beginning with Met-Leu-Ala and Met-Leu-Gly. N-terminal acetylation protects proteins from ubiquitination and degradation by the N-end rule pathway. This is N-alpha-acetyltransferase 30 (naa30) from Xenopus laevis (African clawed frog).